We begin with the raw amino-acid sequence, 272 residues long: 1,4-dihydroxy-2-naphthoyl-CoA synthase (272 aa).

Substrate-binding positions include Arg-33, 72-76, Tyr-84, 116-120, Thr-142, Ser-148, Tyr-245, and Lys-260; these read SGGDQ and YAIGG. 141–143 serves as a coordination point for hydrogencarbonate; it reads QTG. The segment covering 253–264 has biased composition (basic and acidic residues); it reads GRDAFKEKRDPD. A disordered region spans residues 253 to 272; the sequence is GRDAFKEKRDPDFDQFPKFP.

This sequence belongs to the enoyl-CoA hydratase/isomerase family. MenB subfamily. The cofactor is hydrogencarbonate.

The catalysed reaction is 2-succinylbenzoyl-CoA + H(+) = 1,4-dihydroxy-2-naphthoyl-CoA + H2O. It functions in the pathway quinol/quinone metabolism; 1,4-dihydroxy-2-naphthoate biosynthesis; 1,4-dihydroxy-2-naphthoate from chorismate: step 6/7. The protein operates within quinol/quinone metabolism; menaquinone biosynthesis. Converts o-succinylbenzoyl-CoA (OSB-CoA) to 1,4-dihydroxy-2-naphthoyl-CoA (DHNA-CoA). The chain is 1,4-dihydroxy-2-naphthoyl-CoA synthase from Staphylococcus haemolyticus (strain JCSC1435).